A 685-amino-acid polypeptide reads, in one-letter code: Tripartite terminase subunit 1 (685 aa).

The C3H1-type zinc-finger motif lies at 173 to 201 (CWRCVGELMVLPNHGNPSTAEGTHVSCNH). Disordered regions lie at residues 231–254 (EEKARPGGPEEGAVPGPGRPEAEG) and 394–423 (LGRGEEEASRESPEVPRPAGAREPGPSGAL). Positions 395–407 (GRGEEEASRESPE) are enriched in basic and acidic residues. 619 to 626 (YNKTWGRS) serves as a coordination point for ATP.

The protein belongs to the herpesviridae TRM1 protein family. In terms of assembly, associates with TRM2 and TRM3 to form the tripartite terminase complex. Interacts with portal protein.

The protein resides in the host nucleus. Component of the molecular motor that translocates viral genomic DNA in empty capsid during DNA packaging. Forms a tripartite terminase complex together with TRM2 and TRM3 in the host cytoplasm. Once the complex reaches the host nucleus, it interacts with the capsid portal vertex. This portal forms a ring in which genomic DNA is translocated into the capsid. TRM1 carries an endonuclease activity that plays an important role for the cleavage of concatemeric viral DNA into unit length genomes. This chain is Tripartite terminase subunit 1, found in Epstein-Barr virus (strain B95-8) (HHV-4).